The primary structure comprises 275 residues: 2-dehydro-3-deoxyphosphooctonate aldolase (275 aa).

This sequence belongs to the KdsA family.

Its subcellular location is the cytoplasm. It catalyses the reaction D-arabinose 5-phosphate + phosphoenolpyruvate + H2O = 3-deoxy-alpha-D-manno-2-octulosonate-8-phosphate + phosphate. Its pathway is carbohydrate biosynthesis; 3-deoxy-D-manno-octulosonate biosynthesis; 3-deoxy-D-manno-octulosonate from D-ribulose 5-phosphate: step 2/3. The protein operates within bacterial outer membrane biogenesis; lipopolysaccharide biosynthesis. This is 2-dehydro-3-deoxyphosphooctonate aldolase from Francisella tularensis subsp. holarctica (strain LVS).